The sequence spans 423 residues: Gamma-glutamyl phosphate reductase (423 aa).

Residues 1–14 show a composition bias toward low complexity; that stretch reads MTLQAAPRSAAAQQ. A disordered region spans residues 1-25; it reads MTLQAAPRSAAAQQREPDLRQEVHD. Positions 15–25 are enriched in basic and acidic residues; sequence REPDLRQEVHD.

Belongs to the gamma-glutamyl phosphate reductase family.

The protein resides in the cytoplasm. The enzyme catalyses L-glutamate 5-semialdehyde + phosphate + NADP(+) = L-glutamyl 5-phosphate + NADPH + H(+). It functions in the pathway amino-acid biosynthesis; L-proline biosynthesis; L-glutamate 5-semialdehyde from L-glutamate: step 2/2. Catalyzes the NADPH-dependent reduction of L-glutamate 5-phosphate into L-glutamate 5-semialdehyde and phosphate. The product spontaneously undergoes cyclization to form 1-pyrroline-5-carboxylate. This chain is Gamma-glutamyl phosphate reductase, found in Mycobacterium marinum (strain ATCC BAA-535 / M).